The sequence spans 464 residues: ATP synthase subunit beta (464 aa).

152-159 (GGAGVGKT) serves as a coordination point for ATP.

This sequence belongs to the ATPase alpha/beta chains family. As to quaternary structure, F-type ATPases have 2 components, CF(1) - the catalytic core - and CF(0) - the membrane proton channel. CF(1) has five subunits: alpha(3), beta(3), gamma(1), delta(1), epsilon(1). CF(0) has three main subunits: a(1), b(2) and c(9-12). The alpha and beta chains form an alternating ring which encloses part of the gamma chain. CF(1) is attached to CF(0) by a central stalk formed by the gamma and epsilon chains, while a peripheral stalk is formed by the delta and b chains.

The protein localises to the cell membrane. It catalyses the reaction ATP + H2O + 4 H(+)(in) = ADP + phosphate + 5 H(+)(out). Functionally, produces ATP from ADP in the presence of a proton gradient across the membrane. The catalytic sites are hosted primarily by the beta subunits. The sequence is that of ATP synthase subunit beta from Ureaplasma urealyticum serovar 10 (strain ATCC 33699 / Western).